The chain runs to 753 residues: MSADSIEPKQKRLRYADANKGRKVERKNTPRFEATTGLQSPGEEEQISADGGWVLIHPTPKTMLFKEILMGELGYTEGQGVYNAIRSTEAAIRQIQTTILTNTLNATRYEDLAKDWQTHLDSRGVSAEEIAATYGMYSEGEAVRVAEQIFATWHRTLQMSLLDFVRSITACFSASEPDGTASFAKYIDWIACLGLIPLQRLKRAPGATVHPKLWRKLPTDVPSLESCVDERDLAGKLYVANSLLREGLEAVVELARCTASVAIMDYDRVNIFYHYTRREVVAIDSTTGKRGECLVLWQPIWKDGSVLFDSPLQRICGEVCNCHALREHAKLCQLLNTVPVKILVGRKKDEAQGPGWASKAVDKLMGEGEELHSSSAASRLVKLIVNMKSMRHIGDITETVRSYLNETSTNLLSGAQVDTSLPGFGQSGKTKQGGNMPVQEAFRTSVINGINGMLEGYVNNLFKTIEDLRTGNSGLLDQLRDRESEITHLREQLLRVSQAAADGSTQPGASSAALPGSGAKSGAGGLGHEVIDIRNLMGDDGYVANSFQSRYIPAYTADMERLSRLWDQELLRCFKMNRITNNQGQEMSVSYSNSSISLLLAPYFFSILRARHLGFLITHQEAYRSEEELCVAVFKKTRLEAYLTELSTLFVARVRNSIAALNSTKRDLPVNDNEAQSDEEQLGKPSDERYYEGRDRSASPQRDRGRNGRGYHKRRRFSNNYRRRSGLARDSSIRDRSQRGSRPTPLLHDHVGH.

The segment covering 1 to 30 (MSADSIEPKQKRLRYADANKGRKVERKNTP) has biased composition (basic and acidic residues). The segment at 1-44 (MSADSIEPKQKRLRYADANKGRKVERKNTPRFEATTGLQSPGEE) is disordered. The interval 454–475 (LEGYVNNLFKTIEDLRTGNSGL) is putative leucine zipper motif. Disordered stretches follow at residues 498-523 (QAAA…KSGA) and 668-753 (LPVN…HVGH). A compositionally biased stretch (low complexity) spans 507-518 (PGASSAALPGSG). A compositionally biased stretch (basic and acidic residues) spans 681 to 706 (QLGKPSDERYYEGRDRSASPQRDRGR). The segment covering 707–726 (NGRGYHKRRRFSNNYRRRSG) has biased composition (basic residues).

The protein belongs to the herpesviridae portal protein family. In terms of assembly, homododecamerizes. Interacts with terminase subunits TRM1 and TRM3.

Its subcellular location is the virion. The protein resides in the host nucleus. Functionally, forms a portal in the viral capsid through which viral DNA is translocated during DNA packaging. Assembles as a dodecamer at a single fivefold axe of the T=16 icosahedric capsid. Binds to the molecular motor that translocates the viral DNA, termed terminase. The protein is Portal protein of Equus caballus (Horse).